Consider the following 141-residue polypeptide: Cystatin (141 aa).

The signal sequence occupies residues 1–26 (MVHSQLPVVALLRLLCALLLLPSATM). One can recognise a Cystatin domain in the interval 29–129 (GGLSPRSVTD…CRFQVWSRPW (101 aa)). The short motif at 73–77 (QVVAG) is the Secondary area of contact element. 2 disulfide bridges follow: Cys-91-Cys-107 and Cys-120-Cys-140.

Belongs to the cystatin family. In terms of tissue distribution, expressed at a low level by the venom gland (at protein level).

The protein resides in the secreted. Its function is as follows. Inhibits various C1 cysteine proteases including cathepsin L, papain and cathepsin B. This protein has no toxic activity and its function in the venom is unknown. It may play a role as a housekeeping or regulatory protein. The chain is Cystatin from Notechis scutatus scutatus (Mainland tiger snake).